The primary structure comprises 355 residues: Ion-translocating oxidoreductase complex subunit D (355 aa).

A run of 4 helical transmembrane segments spans residues 23–43 (WVALCALPGLLAQTYFFGWGT), 44–64 (LVQLILAITIALSLEALVMLF), 78–109 (ALVTAWLLAVAIPPMAPWWIITIGLLFAIVIA), and 129–149 (VVLLISFPVQMTSWSAPLPLI). FMN phosphoryl threonine is present on Thr-194. Helical transmembrane passes span 221–241 (FAGVGWQWVNLAYLAGGLILL), 250–270 (IPVGFLGALLVMSSFFSLFFP), 273–293 (TASPLFHLLSGATMLGAFFIA), 307–327 (ILFGAIIGTLVFIIRSWGGFP), and 328–348 (DGVAFAVLLANMCVPLIDYYT).

The protein belongs to the NqrB/RnfD family. The complex is composed of six subunits: RnfA, RnfB, RnfC, RnfD, RnfE and RnfG. FMN is required as a cofactor.

It localises to the cell inner membrane. Its function is as follows. Part of a membrane-bound complex that couples electron transfer with translocation of ions across the membrane. The polypeptide is Ion-translocating oxidoreductase complex subunit D (Vibrio vulnificus (strain CMCP6)).